Consider the following 358-residue polypeptide: WAT1-related protein At3g28080 (358 aa).

10 consecutive transmembrane segments (helical) span residues 12–32, 42–62, 81–101, 105–125, 137–157, 187–207, 219–239, 245–265, 283–303, and 308–328; these read AVFLTAMLAGETSIVGLSTLF, IYPFLSYSYLLASLLLLPSLF, IGLLGFLGSMYVITGGIGIEY, TLASAIGNIVPALTFILAVIF, SVAKVMGTILSLIGAFVVIFY, WLIGGAILTIQGIFVSVSFIL, FTVSILYILCISIVTSMIGLV, PSIWIIHFDITLFTIVTTGII, LYLAIFKPLSILIAVVMGTIF, and LYLGCLIGGILITLGFYVVMW. The 129-residue stretch at 27–155 folds into the EamA domain; sequence GLSTLFKVAT…LSLIGAFVVI (129 aa).

The protein belongs to the drug/metabolite transporter (DMT) superfamily. Plant drug/metabolite exporter (P-DME) (TC 2.A.7.4) family.

It is found in the membrane. The polypeptide is WAT1-related protein At3g28080 (Arabidopsis thaliana (Mouse-ear cress)).